A 492-amino-acid polypeptide reads, in one-letter code: uncharacterized protein (492 aa).

This sequence belongs to the FGGY kinase family.

This is an uncharacterized protein from Escherichia coli (strain K12).